We begin with the raw amino-acid sequence, 346 residues long: Biotin synthase (346 aa).

The region spanning 38–256 (RQVQVSTLLS…IAVARIMMPT (219 aa)) is the Radical SAM core domain. [4Fe-4S] cluster is bound by residues Cys53, Cys57, and Cys60. [2Fe-2S] cluster contacts are provided by Cys97, Cys128, Cys188, and Arg260.

Belongs to the radical SAM superfamily. Biotin synthase family. As to quaternary structure, homodimer. [4Fe-4S] cluster serves as cofactor. Requires [2Fe-2S] cluster as cofactor.

It catalyses the reaction (4R,5S)-dethiobiotin + (sulfur carrier)-SH + 2 reduced [2Fe-2S]-[ferredoxin] + 2 S-adenosyl-L-methionine = (sulfur carrier)-H + biotin + 2 5'-deoxyadenosine + 2 L-methionine + 2 oxidized [2Fe-2S]-[ferredoxin]. It functions in the pathway cofactor biosynthesis; biotin biosynthesis; biotin from 7,8-diaminononanoate: step 2/2. Catalyzes the conversion of dethiobiotin (DTB) to biotin by the insertion of a sulfur atom into dethiobiotin via a radical-based mechanism. The chain is Biotin synthase from Pseudescherichia vulneris (Escherichia vulneris).